A 251-amino-acid polypeptide reads, in one-letter code: NADH-quinone oxidoreductase subunit C (251 aa).

The interval 1 to 34 (MSDANNTAGDANEVNPEKDLSAENLPGQRGQGGE) is disordered.

This sequence belongs to the complex I 30 kDa subunit family. In terms of assembly, NDH-1 is composed of 14 different subunits. Subunits NuoB, C, D, E, F, and G constitute the peripheral sector of the complex.

The protein resides in the cell membrane. The enzyme catalyses a quinone + NADH + 5 H(+)(in) = a quinol + NAD(+) + 4 H(+)(out). Its function is as follows. NDH-1 shuttles electrons from NADH, via FMN and iron-sulfur (Fe-S) centers, to quinones in the respiratory chain. The immediate electron acceptor for the enzyme in this species is believed to be a menaquinone. Couples the redox reaction to proton translocation (for every two electrons transferred, four hydrogen ions are translocated across the cytoplasmic membrane), and thus conserves the redox energy in a proton gradient. The chain is NADH-quinone oxidoreductase subunit C from Streptomyces coelicolor (strain ATCC BAA-471 / A3(2) / M145).